Consider the following 228-residue polypeptide: Probable septum site-determining protein MinC (228 aa).

It belongs to the MinC family. In terms of assembly, interacts with MinD and FtsZ.

In terms of biological role, cell division inhibitor that blocks the formation of polar Z ring septums. Rapidly oscillates between the poles of the cell to destabilize FtsZ filaments that have formed before they mature into polar Z rings. Prevents FtsZ polymerization. The chain is Probable septum site-determining protein MinC from Pectobacterium atrosepticum (strain SCRI 1043 / ATCC BAA-672) (Erwinia carotovora subsp. atroseptica).